Here is a 77-residue protein sequence, read N- to C-terminus: U8-lycotoxin-Ls1j (77 aa).

An N-terminal signal peptide occupies residues 1-20 (MKLIIFTGLILFAIVSLIEA). Positions 21–26 (QANNEK) are excised as a propeptide.

The protein belongs to the neurotoxin 19 (CSTX) family. 08 (U8-Lctx) subfamily. Contains 4 disulfide bonds. Expressed by the venom gland.

Its subcellular location is the secreted. This Lycosa singoriensis (Wolf spider) protein is U8-lycotoxin-Ls1j.